Here is a 248-residue protein sequence, read N- to C-terminus: Pyridoxine 5'-phosphate synthase (248 aa).

3-amino-2-oxopropyl phosphate is bound at residue Asn12. Position 14–15 (14–15 (DH)) interacts with 1-deoxy-D-xylulose 5-phosphate. A 3-amino-2-oxopropyl phosphate-binding site is contributed by Arg23. His48 serves as the catalytic Proton acceptor. 1-deoxy-D-xylulose 5-phosphate contacts are provided by Arg50 and His55. Glu75 serves as the catalytic Proton acceptor. Thr105 contacts 1-deoxy-D-xylulose 5-phosphate. The Proton donor role is filled by His196. 3-amino-2-oxopropyl phosphate-binding positions include Gly197 and 218–219 (GH).

It belongs to the PNP synthase family. Homooctamer; tetramer of dimers.

The protein resides in the cytoplasm. The catalysed reaction is 3-amino-2-oxopropyl phosphate + 1-deoxy-D-xylulose 5-phosphate = pyridoxine 5'-phosphate + phosphate + 2 H2O + H(+). It functions in the pathway cofactor biosynthesis; pyridoxine 5'-phosphate biosynthesis; pyridoxine 5'-phosphate from D-erythrose 4-phosphate: step 5/5. In terms of biological role, catalyzes the complicated ring closure reaction between the two acyclic compounds 1-deoxy-D-xylulose-5-phosphate (DXP) and 3-amino-2-oxopropyl phosphate (1-amino-acetone-3-phosphate or AAP) to form pyridoxine 5'-phosphate (PNP) and inorganic phosphate. This Pseudomonas fluorescens (strain ATCC BAA-477 / NRRL B-23932 / Pf-5) protein is Pyridoxine 5'-phosphate synthase.